The following is a 700-amino-acid chain: Pentatricopeptide repeat-containing protein At3g26540 (700 aa).

PPR repeat units follow at residues 95–125 (PIFL…MPER), 126–160 (DGGS…GVRA), 161–195 (TETS…GYSG), 196–226 (NVDL…IVNP), 227–261 (SDVS…NVRP), 262–296 (LNHT…SVVA), 297–327 (DTVV…TRSK), 328–362 (DLKS…NIVS), 363–389 (WNAM…MRQE), 394–428 (DNVT…GYDT), 429–459 (NVIV…MSEL), 461–495 (DEVS…AKPS), 497–529 (YTLA…GYKI), 530–560 (DVVI…AATR), 561–595 (DLIL…GVKP), 596–626 (DHVT…MSTK), and 632–662 (QVEH…MPFD).

It belongs to the PPR family. PCMP-A subfamily.

This Arabidopsis thaliana (Mouse-ear cress) protein is Pentatricopeptide repeat-containing protein At3g26540 (PCMP-A5).